Consider the following 337-residue polypeptide: MPQDVDFHIPLPGRQSPDHARAEAEQLAWPRSLGLIRSDAAAERHLRGGYADLASRFYPHATGADLDLGVDLMSWFFLFDDLFDGPRGENPEDTKQLTDQVAAALDGPLPDTAPPIAHGFADIWRRTCEGMTPAWCARSARHWRNYFDGYVDEAESRFWNAPCDSAAQYLAMRRHTIGVQPTVDLAERAGRFEVPHRVFDSAVMSAMLQIAVDVNLLLNDIASLEKEEARGEQNNMVMILRREHGWSKSRSVSHMQNEVRARLEQYLLLESCLPKVGEIYQLDTAEREALERYRTDAVRTVIRGSYDWHRSSGRYDAEFALAAGAQGYLEELGSSAH.

Aspartate 80 and aspartate 84 together coordinate Mg(2+). The DDXXD motif signature appears at 80 to 84; it reads DDLFD. Cysteines 128 and 136 form a disulfide. Positions 219, 223, and 227 each coordinate Mg(2+).

This sequence belongs to the terpene synthase family. In terms of assembly, monomer. Requires Mg(2+) as cofactor.

It carries out the reaction (2E,6E)-farnesyl diphosphate = pentalenene + diphosphate. Its pathway is sesquiterpene biosynthesis; pentalenene biosynthesis; pentalenene from farnesyl diphosphate: step 1/1. It participates in antibiotic biosynthesis; pentalenolactone biosynthesis. Its function is as follows. Catalyzes the cyclization of farnesyl diphosphate (FPP) to the tricyclic sesquiterpene pentalenene, which is the hydrocarbon precursor of the pentalenolactone family of antibiotics produced by a variety of Streptomyces species. The sequence is that of Pentalenene synthase (penA) from Streptomyces exfoliatus (Streptomyces hydrogenans).